Reading from the N-terminus, the 389-residue chain is STE20-related kinase adapter protein alpha (389 aa).

The Protein kinase domain occupies 11 to 321 (YELLTIIGRG…AGALLNHPFF (311 aa)).

It belongs to the protein kinase superfamily. STE Ser/Thr protein kinase family. STE20 subfamily. As to quaternary structure, component of a trimeric complex composed of STK11/LKB1, STRAD (STRADA or STRADB) and CAB39/MO25 (CAB39/MO25alpha or CAB39L/MO25beta): the complex tethers STK11/LKB1 in the cytoplasm and stimulates its catalytic activity. In terms of tissue distribution, expressed in brain, hypothalamus, heart and skeletal muscle.

The protein resides in the nucleus. The protein localises to the cytoplasm. Pseudokinase which, in complex with CAB39/MO25 (CAB39/MO25alpha or CAB39L/MO25beta), binds to and activates STK11/LKB1. Adopts a closed conformation typical of active protein kinases and binds STK11/LKB1 as a pseudosubstrate, promoting conformational change of STK11/LKB1 in an active conformation. The sequence is that of STE20-related kinase adapter protein alpha (STRADA) from Gallus gallus (Chicken).